Consider the following 183-residue polypeptide: ATP-dependent protease subunit HslV (183 aa).

Residue threonine 12 is part of the active site. Na(+) contacts are provided by alanine 166, cysteine 169, and threonine 172.

Belongs to the peptidase T1B family. HslV subfamily. In terms of assembly, a double ring-shaped homohexamer of HslV is capped on each side by a ring-shaped HslU homohexamer. The assembly of the HslU/HslV complex is dependent on binding of ATP.

Its subcellular location is the cytoplasm. The enzyme catalyses ATP-dependent cleavage of peptide bonds with broad specificity.. With respect to regulation, allosterically activated by HslU binding. Protease subunit of a proteasome-like degradation complex believed to be a general protein degrading machinery. This chain is ATP-dependent protease subunit HslV, found in Afipia carboxidovorans (strain ATCC 49405 / DSM 1227 / KCTC 32145 / OM5) (Oligotropha carboxidovorans).